Reading from the N-terminus, the 342-residue chain is MHLKASEKRALGRTGLTVTALGLGTAPLGGLYAPVSRADADALLEAGWDSGIRYFDSAPMYGYGRCEHLLGDMLREKPERAVISTKVGRLMTNERAGRTLPPAPPKNPLDSGWHNGLNFREVFDYSYDGVMRSFDDSQQRLGFPEIDLLYVHDIGRVTHADRHEFHWNALTRGGGFRALTELRAAGNIKGFGLGVNEWQIIRDALEEADLDCSLLAGRYSLLDQVSEKEFLPLAQKRGMALVIAGVFNSGILAAPRGGEQKFDYADAPAEIIARTNRLHDICDEYHVPLAAAAMQFPLRHEAVSSILIGVRSPEQIRQNVVWFEQSIPDEFWTTLRSEGLIS.

Aspartate 56 is an active-site residue. The active-site Proton donor is tyrosine 61. Lysine 86 is a catalytic residue. NADP(+) is bound at residue glycine 245–proline 255.

The protein belongs to the aldo/keto reductase family. Homodimer.

The catalysed reaction is pyridoxal + NAD(+) = 4-pyridoxolactone + NADH + H(+). It functions in the pathway cofactor degradation; B6 vitamer degradation; 4-pyridoxate from pyridoxal: step 1/2. The protein is Pyridoxal 4-dehydrogenase (pld1) of Microbacterium luteolum (Aureobacterium luteolum).